We begin with the raw amino-acid sequence, 756 residues long: Putative DNA ligase 052L (756 aa).

Lysine 103 functions as the N6-AMP-lysine intermediate in the catalytic mechanism. Positions 610–620 (PSAAGSASPCR) are enriched in low complexity. A disordered region spans residues 610-630 (PSAAGSASPCRPTKRRDDWFD). The BRCT domain maps to 648 to 742 (KKRPPMQGYV…LKRQRKCRAR (95 aa)).

This sequence belongs to the NAD-dependent DNA ligase family.

It carries out the reaction NAD(+) + (deoxyribonucleotide)n-3'-hydroxyl + 5'-phospho-(deoxyribonucleotide)m = (deoxyribonucleotide)n+m + AMP + beta-nicotinamide D-nucleotide.. Its function is as follows. Catalyzes the formation of phosphodiester linkages between 5'-phosphoryl and 3'-hydroxyl groups in double-stranded DNA using NAD as a coenzyme and as the energy source for the reaction. The polypeptide is Putative DNA ligase 052L (Invertebrate iridescent virus 3 (IIV-3)).